A 339-amino-acid chain; its full sequence is MKKRILLLAGGQSEEHEVSLRSARSVLAALPRDQFDVTPVVISPQGRWLPPTDTQRALETGEAVRGGDLVLHRAASAEGYDAVFPLLHGPMGEDGTIQGLLTLAGIPFVGSGVLGSAVSMDKVMTKQVLASVGMPQVAWRLAVRREWQERPQEVRARAGELGYPLFVKPANLGSSVGISKVSGPGELERALDLAFSLGRRVILEAMTAHKPRELEVGILGNDAPIASPVGELRFEADFYDYETKYTEGRATMHIPAPLPPEIAERVRMLALTAFRTLDCAGLARVDFFYVEQTGELFLNEVNTMPGFTTTSMYPKLFEAAGLSYSELVTRLVELALERR.

In terms of domain architecture, ATP-grasp spans 126–333 (KQVLASVGMP…YSELVTRLVE (208 aa)). 158 to 213 (AGELGYPLFVKPANLGSSVGISKVSGPGELERALDLAFSLGRRVILEAMTAHKPRE) serves as a coordination point for ATP. Positions 286, 300, and 302 each coordinate Mg(2+).

The protein belongs to the D-alanine--D-alanine ligase family. Mg(2+) serves as cofactor. It depends on Mn(2+) as a cofactor.

The protein localises to the cytoplasm. It catalyses the reaction 2 D-alanine + ATP = D-alanyl-D-alanine + ADP + phosphate + H(+). Its pathway is cell wall biogenesis; peptidoglycan biosynthesis. Its function is as follows. Cell wall formation. This is D-alanine--D-alanine ligase from Deinococcus geothermalis (strain DSM 11300 / CIP 105573 / AG-3a).